The sequence spans 642 residues: Threonine--tRNA ligase (642 aa).

The region spanning 1-61 (MPVITLPDGS…ETDAELSIIT (61 aa)) is the TGS domain. Positions 243-534 (DHRKIGKQLD…LIEEYAGRFP (292 aa)) are catalytic. Residues cysteine 334, histidine 385, and histidine 511 each coordinate Zn(2+).

The protein belongs to the class-II aminoacyl-tRNA synthetase family. In terms of assembly, homodimer. Zn(2+) serves as cofactor.

It is found in the cytoplasm. It carries out the reaction tRNA(Thr) + L-threonine + ATP = L-threonyl-tRNA(Thr) + AMP + diphosphate + H(+). In terms of biological role, catalyzes the attachment of threonine to tRNA(Thr) in a two-step reaction: L-threonine is first activated by ATP to form Thr-AMP and then transferred to the acceptor end of tRNA(Thr). Also edits incorrectly charged L-seryl-tRNA(Thr). The chain is Threonine--tRNA ligase from Shewanella sp. (strain W3-18-1).